The chain runs to 436 residues: DEAD-box ATP-dependent RNA helicase CshB (436 aa).

Positions 4 to 32 match the Q motif motif; the sequence is QTFTQYDFKPFLIDAVRELRFTEPTGIQQ. One can recognise a Helicase ATP-binding domain in the interval 35 to 209; sequence FPVVKKGVSV…KKYMENPEHI (175 aa). 48–55 provides a ligand contact to ATP; the sequence is SQTGSGKT. The DEAD box motif lies at 157 to 160; sequence DEAD. In terms of domain architecture, Helicase C-terminal spans 240–388; the sequence is MLLQFKPYLA…WADLGERRRR (149 aa). Residues 385–436 form a disordered region; that stretch reads RRRRKSRKKPNDELDVMATKVIKKPKKVKPNYKRKLATERDKVKRKYSNKKR. Basic residues-rich tracts occupy residues 405–419 and 427–436; these read VIKK…YKRK and VKRKYSNKKR.

This sequence belongs to the DEAD box helicase family. CshB subfamily.

The protein resides in the cytoplasm. The catalysed reaction is ATP + H2O = ADP + phosphate + H(+). Functionally, probable DEAD-box RNA helicase. May work in conjunction with the cold shock proteins to ensure proper initiation of transcription at low and optimal temperatures. Unwinds dsRNA in both 5'- and 3'-directions and shows RNA-dependent ATPase activity. Probably has a somewhat redundant function with CshA, as cshA can partially complement the growth effects of a cshB deletion. This chain is DEAD-box ATP-dependent RNA helicase CshB, found in Bacillus cereus (strain ATCC 14579 / DSM 31 / CCUG 7414 / JCM 2152 / NBRC 15305 / NCIMB 9373 / NCTC 2599 / NRRL B-3711).